Reading from the N-terminus, the 246-residue chain is Adenosylcobinamide-GDP ribazoletransferase (246 aa).

6 helical membrane passes run 34–54 (IVTFPLVGLLLGAIAGAVALL), 59–79 (CGVPLAALFGVLALALLTGGF), 113–133 (GGLALIFVLVAKVLVVGELLL), 136–156 (IHPIAALAAACAVGRGMAALL), 181–201 (TLVTMAMAIALATALLGLQGL), and 203–223 (AALITLVLIWGLGWALKRTLG).

It belongs to the CobS family. The cofactor is Mg(2+).

The protein localises to the cell inner membrane. It catalyses the reaction alpha-ribazole + adenosylcob(III)inamide-GDP = adenosylcob(III)alamin + GMP + H(+). The catalysed reaction is alpha-ribazole 5'-phosphate + adenosylcob(III)inamide-GDP = adenosylcob(III)alamin 5'-phosphate + GMP + H(+). It participates in cofactor biosynthesis; adenosylcobalamin biosynthesis; adenosylcobalamin from cob(II)yrinate a,c-diamide: step 7/7. Its function is as follows. Joins adenosylcobinamide-GDP and alpha-ribazole to generate adenosylcobalamin (Ado-cobalamin). Also synthesizes adenosylcobalamin 5'-phosphate from adenosylcobinamide-GDP and alpha-ribazole 5'-phosphate. In Klebsiella pneumoniae subsp. pneumoniae (strain ATCC 700721 / MGH 78578), this protein is Adenosylcobinamide-GDP ribazoletransferase.